The following is a 345-amino-acid chain: N-acetyl-gamma-glutamyl-phosphate reductase (345 aa).

Cys149 is a catalytic residue.

This sequence belongs to the NAGSA dehydrogenase family. Type 1 subfamily.

It is found in the cytoplasm. It catalyses the reaction N-acetyl-L-glutamate 5-semialdehyde + phosphate + NADP(+) = N-acetyl-L-glutamyl 5-phosphate + NADPH + H(+). It participates in amino-acid biosynthesis; L-arginine biosynthesis; N(2)-acetyl-L-ornithine from L-glutamate: step 3/4. Its function is as follows. Catalyzes the NADPH-dependent reduction of N-acetyl-5-glutamyl phosphate to yield N-acetyl-L-glutamate 5-semialdehyde. This Bacillus cereus (strain ATCC 10987 / NRS 248) protein is N-acetyl-gamma-glutamyl-phosphate reductase.